Consider the following 343-residue polypeptide: Protein RecA (343 aa).

Residue 64-71 (GPESSGKT) coordinates ATP.

Belongs to the RecA family.

It localises to the cytoplasm. Functionally, can catalyze the hydrolysis of ATP in the presence of single-stranded DNA, the ATP-dependent uptake of single-stranded DNA by duplex DNA, and the ATP-dependent hybridization of homologous single-stranded DNAs. It interacts with LexA causing its activation and leading to its autocatalytic cleavage. The protein is Protein RecA of Bacillus cereus (strain B4264).